The sequence spans 351 residues: Cytoplasmic dynein 2 light intermediate chain 1 (351 aa).

The disordered stretch occupies residues 304 to 335 (TLKAIQDPARDPQYAESEVDEMRVQKDQELEQ). The segment covering 323-335 (DEMRVQKDQELEQ) has biased composition (basic and acidic residues).

The protein belongs to the dynein light intermediate chain family. Light intermediate chain of the cytoplasmic dynein complex 2, a multisubunit complex composed at least of eleven different proteins. The cytoplasmic dynein 2 complex consists of two catalytic heavy chains (HCs) and a number of non-catalytic subunits presented by intermediate chains (ICs), light intermediate chains (LICs) and light chains (LCs). Among them, a heavy chain (DYNC2H1), two intermediate chains (DYNC2I2 and DYNC2I1), a light intermediate chain (DYNC2LI1), and a light chain (DYNLT2B) are unique to the dynein-2 complex, but a subset of light chains are also shared by dynein-1 and dynein-2 complexes. Dynein-2 complex is built around two copies of cytoplasmic dynein 2 heavy chain 1 (DYNC2H1). The C-terminal region forms the motor domain, which converts the energy from ATP hydrolysis into movement. Its N-terminal region forms the tail, an extended structure that binds the other subunits and holds the two heavy chains in a homodimer. Interacts with DYNC2H1 (via N-terminus); this interaction stabilizes the dynein-2 complex structure.

The protein resides in the cytoplasm. The protein localises to the cell projection. It is found in the cilium. It localises to the cytoskeleton. Its subcellular location is the cilium basal body. The protein resides in the cilium axoneme. The protein localises to the microtubule organizing center. It is found in the centrosome. Functionally, acts as one of several non-catalytic accessory components of the cytoplasmic dynein 2 complex (dynein-2 complex), a motor protein complex that drives the movement of cargos along microtubules within cilia and flagella in concert with the intraflagellar transport (IFT) system, facilitating the assembly of these organelles. Involved in the regulation of ciliary length. In Rattus norvegicus (Rat), this protein is Cytoplasmic dynein 2 light intermediate chain 1 (Dync2li1).